The following is a 119-amino-acid chain: Small ribosomal subunit protein uS13 (119 aa).

The tract at residues 90-119 is disordered; the sequence is IRHRRGLPLRGQRTRSNARTRKGKRKPIRS. Basic residues predominate over residues 91-119; it reads RHRRGLPLRGQRTRSNARTRKGKRKPIRS.

Belongs to the universal ribosomal protein uS13 family. Part of the 30S ribosomal subunit. Forms a loose heterodimer with protein S19. Forms two bridges to the 50S subunit in the 70S ribosome.

Located at the top of the head of the 30S subunit, it contacts several helices of the 16S rRNA. In the 70S ribosome it contacts the 23S rRNA (bridge B1a) and protein L5 of the 50S subunit (bridge B1b), connecting the 2 subunits; these bridges are implicated in subunit movement. Contacts the tRNAs in the A and P-sites. The protein is Small ribosomal subunit protein uS13 of Coxiella burnetii (strain CbuK_Q154) (Coxiella burnetii (strain Q154)).